Reading from the N-terminus, the 259-residue chain is Type III pantothenate kinase (259 aa).

ATP is bound at residue aspartate 6–valine 13. Glycine 107–arginine 110 contacts substrate. The Proton acceptor role is filled by aspartate 109. A K(+)-binding site is contributed by aspartate 129. ATP is bound at residue threonine 132. Substrate is bound at residue threonine 184.

It belongs to the type III pantothenate kinase family. Homodimer. The cofactor is NH4(+). K(+) serves as cofactor.

The protein resides in the cytoplasm. It catalyses the reaction (R)-pantothenate + ATP = (R)-4'-phosphopantothenate + ADP + H(+). It participates in cofactor biosynthesis; coenzyme A biosynthesis; CoA from (R)-pantothenate: step 1/5. Its function is as follows. Catalyzes the phosphorylation of pantothenate (Pan), the first step in CoA biosynthesis. In Ruegeria pomeroyi (strain ATCC 700808 / DSM 15171 / DSS-3) (Silicibacter pomeroyi), this protein is Type III pantothenate kinase.